The chain runs to 519 residues: Demethylepipodophyllotoxin synthase (519 aa).

The helical transmembrane segment at 6–26 (CLETLLLGFFVLLPCFFYFVW) threads the bilayer. Residue Cys-458 participates in heme binding.

The protein belongs to the cytochrome P450 family. Heme is required as a cofactor. As to expression, rhizome-specific expression.

The protein resides in the membrane. It carries out the reaction (-)-4'-desmethyl-deoxypodophyllotoxin + reduced [NADPH--hemoprotein reductase] + O2 = 4'-demethylepipodophyllotoxin + oxidized [NADPH--hemoprotein reductase] + H2O + H(+). The protein operates within aromatic compound metabolism; phenylpropanoid biosynthesis. Cytochrome P450 involved in the biosynthesis of etoposide, a chemotherapeutic compound of the topoisomerase inhibitor family. Catalyzes the hydroxylation of deoxypodophyllotoxin to form epipodophyllotoxin. The protein is Demethylepipodophyllotoxin synthase of Sinopodophyllum hexandrum (Himalayan may apple).